A 131-amino-acid polypeptide reads, in one-letter code: Profilin-1 (131 aa).

The protein belongs to the profilin family. As to quaternary structure, occurs in many kinds of cells as a complex with monomeric actin in a 1:1 ratio.

It is found in the cytoplasm. The protein resides in the cytoskeleton. Binds to actin and affects the structure of the cytoskeleton. At high concentrations, profilin prevents the polymerization of actin, whereas it enhances it at low concentrations. By binding to PIP2, it inhibits the formation of IP3 and DG. The sequence is that of Profilin-1 (PRO1) from Ricinus communis (Castor bean).